The chain runs to 333 residues: GDP-fucose transporter 1 (333 aa).

The next 8 membrane-spanning stretches (helical) occupy residues 13–33 (SIKIAFVVALYWVVSISMVFL), 45–65 (APMFVTWFQCVVAVVTCFILG), 95–115 (LVFVGMIAFNNLALKFVGVAF), 139–159 (TSMPALLMCGVIVAGFFVGVN), 169–189 (MAGIMYGVLASLCVALNAIYI), 211–231 (AIFLFLPVITFMGEIPDIAAS), 239–259 (YWFLMTVAGLLGIAIGLVSML), and 293–313 (TATWWLGNVFVLGGSLGYVLV).

The protein belongs to the TPT transporter family. SLC35C subfamily.

The protein resides in the golgi apparatus membrane. The enzyme catalyses GMP(out) + GDP-beta-L-fucose(in) = GMP(in) + GDP-beta-L-fucose(out). In terms of biological role, antiporter specific for GDP-l-fucose and depending on the concomitant reverse transport of GMP. Involved in GDP-fucose import from the cytoplasm into the Golgi lumen. The protein is GDP-fucose transporter 1 (slc35c1) of Monosiga brevicollis (Choanoflagellate).